The following is a 130-amino-acid chain: Large ribosomal subunit protein bL12 (130 aa).

It belongs to the bacterial ribosomal protein bL12 family. Homodimer. Part of the ribosomal stalk of the 50S ribosomal subunit. Forms a multimeric L10(L12)X complex, where L10 forms an elongated spine to which 2 to 4 L12 dimers bind in a sequential fashion. Binds GTP-bound translation factors.

Functionally, forms part of the ribosomal stalk which helps the ribosome interact with GTP-bound translation factors. Is thus essential for accurate translation. The sequence is that of Large ribosomal subunit protein bL12 from Yersinia pestis bv. Antiqua (strain Angola).